We begin with the raw amino-acid sequence, 201 residues long: Large ribosomal subunit protein uL4 (201 aa).

The segment at 46-71 (QKTRAEVVGSGKKPWRQKGTGRARAG) is disordered.

It belongs to the universal ribosomal protein uL4 family. In terms of assembly, part of the 50S ribosomal subunit.

In terms of biological role, one of the primary rRNA binding proteins, this protein initially binds near the 5'-end of the 23S rRNA. It is important during the early stages of 50S assembly. It makes multiple contacts with different domains of the 23S rRNA in the assembled 50S subunit and ribosome. Functionally, forms part of the polypeptide exit tunnel. This Shewanella piezotolerans (strain WP3 / JCM 13877) protein is Large ribosomal subunit protein uL4.